Here is a 346-residue protein sequence, read N- to C-terminus: LRP2-binding protein (346 aa).

Residues 58 to 91 form a TPR repeat; it reads AMAYFLRGQLYFEEGWYEEALAQFEEIQEKDHQA. Sel1-like repeat units lie at residues 92-124, 132-167, 172-205, 206-241, 242-276, and 296-331; these read IYQL…DSSC, FAAA…DNGN, VKAQ…GNGS, LESQ…ERGN, VYAQ…EVHD, and AMAA…RLNP.

In terms of assembly, interacts with LRP2.

Its subcellular location is the cytoplasm. Its function is as follows. May act as an adapter that regulates LRP2 function. This chain is LRP2-binding protein (Lrp2bp), found in Mus musculus (Mouse).